A 239-amino-acid chain; its full sequence is Sugar fermentation stimulation protein homolog (239 aa).

It belongs to the SfsA family.

The sequence is that of Sugar fermentation stimulation protein homolog from Methanobrevibacter smithii (strain ATCC 35061 / DSM 861 / OCM 144 / PS).